We begin with the raw amino-acid sequence, 312 residues long: Methionyl-tRNA formyltransferase (312 aa).

Residue 112–115 (SLLP) participates in (6S)-5,6,7,8-tetrahydrofolate binding.

It belongs to the Fmt family.

The enzyme catalyses L-methionyl-tRNA(fMet) + (6R)-10-formyltetrahydrofolate = N-formyl-L-methionyl-tRNA(fMet) + (6S)-5,6,7,8-tetrahydrofolate + H(+). Attaches a formyl group to the free amino group of methionyl-tRNA(fMet). The formyl group appears to play a dual role in the initiator identity of N-formylmethionyl-tRNA by promoting its recognition by IF2 and preventing the misappropriation of this tRNA by the elongation apparatus. The chain is Methionyl-tRNA formyltransferase from Dehalococcoides mccartyi (strain ATCC BAA-2266 / KCTC 15142 / 195) (Dehalococcoides ethenogenes (strain 195)).